The primary structure comprises 938 residues: Protein NLP3 (938 aa).

Disordered regions lie at residues 1–26 and 557–597; these read MEVD…GGGD and LADD…KAEK. Residues 12-26 are compositionally biased toward gly residues; sequence AGEGGGGGIGGGGGD. A compositionally biased stretch (basic and acidic residues) spans 580 to 597; the sequence is SLHKSNKPPERRRGKAEK. The 82-residue stretch at 585–666 folds into the RWP-RK domain; it reads NKPPERRRGK…IESVQGSDAA (82 aa). Positions 640 to 662 form a coiled coil; sequence SRKINKVNRSLSKLKQVIESVQG. The disordered stretch occupies residues 743–769; that stretch reads DKASHSRSSSGEGSINSRTSEASCHGS. Residues 748-762 are compositionally biased toward low complexity; it reads SRSSSGEGSINSRTS. The PB1 domain maps to 847-926; sequence TVTIKASFKE…HVIRLLVSDV (80 aa).

It is found in the nucleus. In terms of biological role, probable transcription factor. The chain is Protein NLP3 (NLP3) from Oryza sativa subsp. japonica (Rice).